We begin with the raw amino-acid sequence, 215 residues long: N-(5'-phosphoribosyl)anthranilate isomerase (215 aa).

It belongs to the TrpF family.

It carries out the reaction N-(5-phospho-beta-D-ribosyl)anthranilate = 1-(2-carboxyphenylamino)-1-deoxy-D-ribulose 5-phosphate. It functions in the pathway amino-acid biosynthesis; L-tryptophan biosynthesis; L-tryptophan from chorismate: step 3/5. This Rippkaea orientalis (strain PCC 8801 / RF-1) (Cyanothece sp. (strain PCC 8801)) protein is N-(5'-phosphoribosyl)anthranilate isomerase.